Consider the following 343-residue polypeptide: CMP-N-acetylneuraminate-beta-galactosamide-alpha-2,3-sialyltransferase 1 (343 aa).

Over 1 to 11 (MAPMRKKSTLK) the chain is Cytoplasmic. The chain crosses the membrane as a helical; Signal-anchor for type II membrane protein span at residues 12-27 (LLTLLVLFIFLTSFFL). The N-linked (GlcNAc...) asparagine glycan is linked to Asn28. Residues 28–343 (NYSHTVVTTA…INKIRIFKGR (316 aa)) are Lumenal-facing. 3 disulfides stabilise this stretch: Cys62–Cys67, Cys64–Cys142, and Cys145–Cys284. N-linked (GlcNAc...) asparagine glycosylation occurs at Asn82. Gln108 provides a ligand contact to substrate. Asn117 carries an N-linked (GlcNAc...) asparagine glycan. Residues Asn150, Asn173, Tyr233, Tyr269, Gly273, Gly293, His302, and His319 each coordinate substrate. Residue Asn326 is glycosylated (N-linked (GlcNAc...) asparagine).

It belongs to the glycosyltransferase 29 family. In terms of processing, the soluble form derives from the membrane form by proteolytic processing. In terms of tissue distribution, the long isoform is abundant in salivary gland, liver, lung, and colon mucosa. Both long and short forms are detected in submaxillary salivary glands.

Its subcellular location is the golgi apparatus. It is found in the golgi stack membrane. It localises to the trans-Golgi network membrane. The protein localises to the secreted. The catalysed reaction is a beta-D-galactosyl-(1-&gt;3)-N-acetyl-alpha-D-galactosaminyl derivative + CMP-N-acetyl-beta-neuraminate = an N-acetyl-alpha-neuraminyl-(2-&gt;3)-beta-D-galactosyl-(1-&gt;3)-N-acetyl-alpha-D-galactosaminyl derivative + CMP + H(+). The enzyme catalyses a ganglioside GM1 (d18:1(4E)) + CMP-N-acetyl-beta-neuraminate = a ganglioside GD1a (d18:1(4E)) + CMP + H(+). It catalyses the reaction ganglioside GM1 (d18:1(4E)/18:0) + CMP-N-acetyl-beta-neuraminate = ganglioside GD1a (18:1(4E)/18:0) + CMP + H(+). It carries out the reaction a ganglioside GA1 (d18:1(4E)) + CMP-N-acetyl-beta-neuraminate = a ganglioside GM1b (d18:1(4E)) + CMP + H(+). The catalysed reaction is a ganglioside GD1b + CMP-N-acetyl-beta-neuraminate = a ganglioside GT1b + CMP + H(+). The enzyme catalyses a 3-O-[beta-D-galactosyl-(1-&gt;3)-N-acetyl-alpha-D-galactosaminyl]-L-threonyl-[protein] + CMP-N-acetyl-beta-neuraminate = a 3-O-[N-acetyl-alpha-neuraminyl-(2-&gt;3)-beta-D-galactosyl-(1-&gt;3)-N-acetyl-alpha-D-galactosaminyl]-L-threonyl-[protein] + CMP + H(+). It catalyses the reaction a 3-O-[beta-D-galactosyl-(1-&gt;3)-N-acetyl-alpha-D-galactosaminyl]-L-seryl-[protein] + CMP-N-acetyl-beta-neuraminate = 3-O-[N-acetyl-alpha-neuraminyl-(2-&gt;3)-beta-D-galactosyl-(1-&gt;3)-N-acetyl-alpha-D-galactosaminyl]-L-seryl-[protein] + CMP + H(+). It functions in the pathway protein modification; protein glycosylation. Its pathway is glycolipid biosynthesis. In terms of biological role, a beta-galactoside alpha2-&gt;3 sialyltransferase involved in terminal sialylation of glycoproteins and glycolipids. Catalyzes the transfer of sialic acid (N-acetyl-neuraminic acid; Neu5Ac) from the nucleotide sugar donor CMP-Neu5Ac onto acceptor Galbeta-(1-&gt;3)-GalNAc-terminated glycoconjugates through an alpha2-3 linkage. Adds sialic acid to the core 1 O-glycan, Galbeta-(1-&gt;3)-GalNAc-O-Ser/Thr, which is a major structure of mucin-type O-glycans. As part of a homeostatic mechanism that regulates CD8-positive T cell numbers, sialylates core 1 O-glycans of T cell glycoproteins, SPN/CD43 and PTPRC/CD45. Prevents premature apoptosis of thymic CD8-positive T cells prior to peripheral emigration, whereas in the secondary lymphoid organs controls the survival of CD8-positive memory T cells generated following a successful immune response. Transfers sialic acid to asialofetuin, presumably onto Galbeta-(1-&gt;3)-GalNAc-O-Ser. Sialylates GM1a, GA1 and GD1b gangliosides to form GD1a, GM1b and GT1b, respectively. In Sus scrofa (Pig), this protein is CMP-N-acetylneuraminate-beta-galactosamide-alpha-2,3-sialyltransferase 1 (ST3GAL1).